We begin with the raw amino-acid sequence, 108 residues long: Cytochrome c6 (108 aa).

Residues 1-23 (MRLLFAFFIICHIFTNNVQLTFA) form the signal peptide. 4 residues coordinate heme c: Cys-37, Cys-40, His-41, and Met-81.

Belongs to the cytochrome c family. PetJ subfamily. Monomer. In terms of processing, binds 1 heme c group covalently per subunit.

Its subcellular location is the plastid. The protein localises to the chloroplast thylakoid lumen. Functionally, functions as an electron carrier between membrane-bound cytochrome b6-f and photosystem I in oxygenic photosynthesis. The polypeptide is Cytochrome c6 (Gracilaria tenuistipitata var. liui (Red alga)).